We begin with the raw amino-acid sequence, 172 residues long: UPF0102 protein AM1_3954 (172 aa).

This sequence belongs to the UPF0102 family.

This chain is UPF0102 protein AM1_3954, found in Acaryochloris marina (strain MBIC 11017).